Consider the following 349-residue polypeptide: Protein DMR6-LIKE OXYGENASE 1 (349 aa).

The Fe2OG dioxygenase domain occupies His197–Pro296. 2-oxoglutarate is bound at residue Tyr206. 3 residues coordinate Fe cation: His221, Asp223, and His277. 2-oxoglutarate-binding residues include Arg287 and Ser289.

Belongs to the iron/ascorbate-dependent oxidoreductase family. It depends on L-ascorbate as a cofactor. The cofactor is Fe(2+).

The catalysed reaction is salicylate + NADH + O2 + H(+) = 2,3-dihydroxybenzoate + NAD(+) + H2O. Functionally, converts salicylic acid (SA) to both 2,3-dihydroxybenzoic acid (2,3-DHBA) and 2,5-DHBA in vitro but only 2,3-DHBA in vivo. Component of a negative feedback regulation system of SA levels during senescence. Regulates both onset and progression of leaf senescence. Negative regulator of defense against Hyaloperonospora arabidopsidis. Its function is as follows. (Microbial infection) Confers susceptibility to the downy mildew pathogen Hyaloperonospora arabidopsidis. The polypeptide is Protein DMR6-LIKE OXYGENASE 1 (Arabidopsis thaliana (Mouse-ear cress)).